The primary structure comprises 352 residues: Ion-translocating oxidoreductase complex subunit D (352 aa).

The next 4 helical transmembrane spans lie at 20-40, 42-62, 89-109, and 123-143; these read IMLL…WFFG, GTLV…ALVL, IPPL…VIIA, and PAMI…TSWL. FMN phosphoryl threonine is present on Thr-187. Transmembrane regions (helical) follow at residues 214–234, 242–262, 267–287, 301–321, and 322–342; these read ILAG…GVWL, WHVP…GWLF, LAAP…FFIL, LIFG…GGYP, and DGVA…DYYT.

Belongs to the NqrB/RnfD family. In terms of assembly, the complex is composed of six subunits: RsxA, RsxB, RsxC, RsxD, RsxE and RsxG. The cofactor is FMN.

It localises to the cell inner membrane. In terms of biological role, part of a membrane-bound complex that couples electron transfer with translocation of ions across the membrane. Required to maintain the reduced state of SoxR. In Escherichia coli (strain UTI89 / UPEC), this protein is Ion-translocating oxidoreductase complex subunit D.